The sequence spans 347 residues: Quinolinate synthase (347 aa).

Iminosuccinate-binding residues include His47 and Ser68. Cys113 is a [4Fe-4S] cluster binding site. Iminosuccinate contacts are provided by residues 139 to 141 (YAN) and Ser156. [4Fe-4S] cluster is bound at residue Cys200. Iminosuccinate-binding positions include 226–228 (HPE) and Thr243. Cys297 contacts [4Fe-4S] cluster.

Belongs to the quinolinate synthase family. Type 1 subfamily. The cofactor is [4Fe-4S] cluster.

It is found in the cytoplasm. The enzyme catalyses iminosuccinate + dihydroxyacetone phosphate = quinolinate + phosphate + 2 H2O + H(+). It participates in cofactor biosynthesis; NAD(+) biosynthesis; quinolinate from iminoaspartate: step 1/1. In terms of biological role, catalyzes the condensation of iminoaspartate with dihydroxyacetone phosphate to form quinolinate. This Enterobacter sp. (strain 638) protein is Quinolinate synthase.